Here is a 241-residue protein sequence, read N- to C-terminus: Small ribosomal subunit protein bS6 (241 aa).

Residues 97–108 (KPKIRERNRKYT) are compositionally biased toward basic residues. Disordered stretches follow at residues 97 to 187 (KPKI…HREN) and 199 to 241 (NKNH…QSSN). Residues 109–118 (PRRDRFDKPN) show a composition bias toward basic and acidic residues. Low complexity-rich tracts occupy residues 130 to 151 (QDQQ…QTSQ), 161 to 180 (DDFQ…QQNQ), and 199 to 210 (NKNHQNQTSQTQ).

Belongs to the bacterial ribosomal protein bS6 family.

Functionally, binds together with bS18 to 16S ribosomal RNA. The chain is Small ribosomal subunit protein bS6 from Mesomycoplasma hyopneumoniae (strain 7448) (Mycoplasma hyopneumoniae).